The sequence spans 128 residues: Sulfurtransferase TusD (128 aa).

Catalysis depends on Cys78, which acts as the Cysteine persulfide intermediate.

This sequence belongs to the DsrE/TusD family. In terms of assembly, heterohexamer, formed by a dimer of trimers. The hexameric TusBCD complex contains 2 copies each of TusB, TusC and TusD. The TusBCD complex interacts with TusE.

It is found in the cytoplasm. Functionally, part of a sulfur-relay system required for 2-thiolation of 5-methylaminomethyl-2-thiouridine (mnm(5)s(2)U) at tRNA wobble positions. Accepts sulfur from TusA and transfers it in turn to TusE. The polypeptide is Sulfurtransferase TusD (Enterobacter sp. (strain 638)).